The following is a 274-amino-acid chain: Probable ribosomal RNA small subunit methyltransferase A (274 aa).

6 residues coordinate S-adenosyl-L-methionine: H22, L24, G50, E71, D99, and N114.

The protein belongs to the class I-like SAM-binding methyltransferase superfamily. rRNA adenine N(6)-methyltransferase family. RsmA subfamily.

The protein resides in the cytoplasm. Functionally, specifically dimethylates two adjacent adenosines in the loop of a conserved hairpin near the 3'-end of 16S rRNA in the 30S particle. May play a critical role in biogenesis of 30S subunits. The sequence is that of Probable ribosomal RNA small subunit methyltransferase A from Natronomonas pharaonis (strain ATCC 35678 / DSM 2160 / CIP 103997 / JCM 8858 / NBRC 14720 / NCIMB 2260 / Gabara) (Halobacterium pharaonis).